Reading from the N-terminus, the 459-residue chain is Ribulose bisphosphate carboxylase large chain (459 aa).

K4 is modified (N6,N6,N6-trimethyllysine). N113 and T163 together coordinate substrate. Residue K165 is the Proton acceptor of the active site. Residue K167 participates in substrate binding. Residues K191, D193, and E194 each coordinate Mg(2+). Position 191 is an N6-carboxylysine (K191). H284 serves as the catalytic Proton acceptor. Residues R285, H317, and S369 each coordinate substrate.

Belongs to the RuBisCO large chain family. Type I subfamily. Heterohexadecamer of 8 large chains and 8 small chains; disulfide-linked. The disulfide link is formed within the large subunit homodimers. Mg(2+) is required as a cofactor. The disulfide bond which can form in the large chain dimeric partners within the hexadecamer appears to be associated with oxidative stress and protein turnover.

Its subcellular location is the plastid. It localises to the chloroplast. The enzyme catalyses 2 (2R)-3-phosphoglycerate + 2 H(+) = D-ribulose 1,5-bisphosphate + CO2 + H2O. It carries out the reaction D-ribulose 1,5-bisphosphate + O2 = 2-phosphoglycolate + (2R)-3-phosphoglycerate + 2 H(+). RuBisCO catalyzes two reactions: the carboxylation of D-ribulose 1,5-bisphosphate, the primary event in carbon dioxide fixation, as well as the oxidative fragmentation of the pentose substrate in the photorespiration process. Both reactions occur simultaneously and in competition at the same active site. The polypeptide is Ribulose bisphosphate carboxylase large chain (Parnassia fimbriata (Fringed grass-of-Parnassus)).